The sequence spans 297 residues: Homoserine kinase (297 aa).

82-92 provides a ligand contact to ATP; the sequence is PLTRGLGSSAS.

Belongs to the GHMP kinase family. Homoserine kinase subfamily.

It is found in the cytoplasm. The catalysed reaction is L-homoserine + ATP = O-phospho-L-homoserine + ADP + H(+). Its pathway is amino-acid biosynthesis; L-threonine biosynthesis; L-threonine from L-aspartate: step 4/5. In terms of biological role, catalyzes the ATP-dependent phosphorylation of L-homoserine to L-homoserine phosphate. The chain is Homoserine kinase from Bacillus cereus (strain G9842).